A 365-amino-acid chain; its full sequence is MIKFLSTFMLLLVTTVVQAERIRDLTSVQGVRQNSLIGYGLVVGLDGTGDQTTQTPFTTQTLNNMLSQLGITVPAGTNMQLKNVAAVMVTASLPPFARQGQTIDVVVSSMGNAKSLRGGTLLMTPLKGVDSQVYALAQGNILVGGAGASAGGSSVQVNQLNGGRITNGAIIERELPSQFGAGNTLNLQLNDEDFAMAQQIADTINRARGYGSATALDSRTIQVNVPSGNSSQVRFLADIQNMQVNVTPQDAKVVINSRTGSVVMNREVTLDSCAVAQGNLSVTVNRQANVSQPDTPFGGGQTVVTPQTQIDLRQSGGSLQSVRSSANLNNVVRALNALGATPMDLMSILQSMQSAGCLRAKLEII.

Positions 1–19 (MIKFLSTFMLLLVTTVVQA) are cleaved as a signal peptide.

It belongs to the FlgI family. In terms of assembly, the basal body constitutes a major portion of the flagellar organelle and consists of four rings (L,P,S, and M) mounted on a central rod.

Its subcellular location is the periplasm. The protein resides in the bacterial flagellum basal body. Its function is as follows. Assembles around the rod to form the L-ring and probably protects the motor/basal body from shearing forces during rotation. The polypeptide is Flagellar P-ring protein (Escherichia fergusonii (strain ATCC 35469 / DSM 13698 / CCUG 18766 / IAM 14443 / JCM 21226 / LMG 7866 / NBRC 102419 / NCTC 12128 / CDC 0568-73)).